The chain runs to 200 residues: Phospholipase A2 inhibitor LNF1 (200 aa).

The signal sequence occupies residues 1-19; it reads MKYLHTICLLFIFVARGNS. 8 disulfides stabilise this stretch: Cys-22-Cys-46, Cys-25-Cys-32, Cys-39-Cys-67, Cys-73-Cys-94, Cys-95-Cys-100, Cys-118-Cys-143, Cys-136-Cys-165, and Cys-169-Cys-191. Asn-176 carries N-linked (GlcNAc...) asparagine glycosylation.

The protein belongs to the CNF-like-inhibitor family. As to quaternary structure, occurs as a mixture of oligomers. Tetrameric arrangement appears to be the predominant quaternary structure. As to expression, expressed by the liver.

It is found in the secreted. Functionally, inhibits the enzymatic activity of phospholipase A2 (PA2). This is Phospholipase A2 inhibitor LNF1 from Lachesis muta muta (Bushmaster).